A 578-amino-acid polypeptide reads, in one-letter code: Membrane protein insertase YidC (578 aa).

A helical transmembrane segment spans residues 7–27; that stretch reads FLAIAISLGILLGFQGLYRHF. The interval 35-70 is disordered; the sequence is ARTATNAGQGKPNNTLGAVPTDATASQSPPPKEGAR. Polar residues predominate over residues 37-50; it reads TATNAGQGKPNNTL. 4 helical membrane-spanning segments follow: residues 362 to 382, 436 to 456, 491 to 511, and 530 to 550; these read LVGNFGVAILIFTVLVKAAFY, LPMLLQFPIFFSLYKVIFVTI, HISPFLHLGIWPLIMGGTMYL, and FMPIIFTFMLARFPVGLVIYW.

The protein belongs to the OXA1/ALB3/YidC family. Type 1 subfamily. As to quaternary structure, interacts with the Sec translocase complex via SecD. Specifically interacts with transmembrane segments of nascent integral membrane proteins during membrane integration.

Its subcellular location is the cell inner membrane. Its function is as follows. Required for the insertion and/or proper folding and/or complex formation of integral membrane proteins into the membrane. Involved in integration of membrane proteins that insert both dependently and independently of the Sec translocase complex, as well as at least some lipoproteins. Aids folding of multispanning membrane proteins. This is Membrane protein insertase YidC from Granulibacter bethesdensis (strain ATCC BAA-1260 / CGDNIH1).